The chain runs to 145 residues: Photosystem I reaction center subunit VI-1, chloroplastic (145 aa).

The transit peptide at 1 to 50 directs the protein to the chloroplast; the sequence is MASLATVAAVKPSAAIKGLGGSSLAGAKLSIKPSRLSFKPKSIRANGVVA. The chain crosses the membrane as a helical span at residues 102-118; sequence LLLKFLILGGGSLLTYV.

This sequence belongs to the psaH family.

Its subcellular location is the plastid. The protein localises to the chloroplast thylakoid membrane. In terms of biological role, possible role could be the docking of the LHC I antenna complex to the core complex. In Arabidopsis thaliana (Mouse-ear cress), this protein is Photosystem I reaction center subunit VI-1, chloroplastic (PSAH1).